A 527-amino-acid polypeptide reads, in one-letter code: Acyl-coenzyme A thioesterase 4, mitochondrial (527 aa).

A mitochondrion-targeting transit peptide spans 1–75 (MMTPIGIRIR…FLFDPPPIRF (75 aa)). 2 HotDog ACOT-type domains span residues 172 to 294 (ILYN…RDSK) and 370 to 487 (KDTC…GPEA).

This sequence belongs to the acyl coenzyme A hydrolase family. Mostly expressed at low levels in glandular trichomes (lupulin glands), and, to a lower extent, in stems, leaves, flowers and cones.

It localises to the mitochondrion. The enzyme catalyses 2-methylpropanoyl-CoA + H2O = 2-methylpropanoate + CoA + H(+). It catalyses the reaction propanoyl-CoA + H2O = propanoate + CoA + H(+). It carries out the reaction octanoyl-CoA + H2O = octanoate + CoA + H(+). The catalysed reaction is butanoyl-CoA + H2O = butanoate + CoA + H(+). The enzyme catalyses 3-methylbutanoyl-CoA + H2O = 3-methylbutanoate + CoA + H(+). It catalyses the reaction 2-methylbutanoyl-CoA + H2O = 2-methylbutanoate + CoA + H(+). In terms of biological role, acyl-CoA thioesterases are a group of enzymes that catalyze the hydrolysis of acyl-CoAs to the free fatty acid and coenzyme A (CoASH), providing the potential to regulate intracellular levels of acyl-CoAs, free fatty acids and CoASH. Active on acyl CoAs with short chains (propanoyl-CoA and butanoyl-CoA), branched short chains (2-methylpropanoyl-CoA, 2-methylbutanoyl-CoA and 3-methylbutanoyl-CoA) and medium chains (octanoyl-CoA). The polypeptide is Acyl-coenzyme A thioesterase 4, mitochondrial (Humulus lupulus (European hop)).